The following is a 288-amino-acid chain: Quinate/shikimate dehydrogenase (288 aa).

Positions 71 and 107 each coordinate substrate. NAD(+) contacts are provided by residues 132-135 (AGGA), 155-158 (NRRD), Lys205, 232-235 (CVYN), and Gly255.

Belongs to the shikimate dehydrogenase family. As to quaternary structure, homodimer.

It catalyses the reaction L-quinate + NAD(+) = 3-dehydroquinate + NADH + H(+). It carries out the reaction L-quinate + NADP(+) = 3-dehydroquinate + NADPH + H(+). The enzyme catalyses shikimate + NADP(+) = 3-dehydroshikimate + NADPH + H(+). The catalysed reaction is shikimate + NAD(+) = 3-dehydroshikimate + NADH + H(+). The protein operates within metabolic intermediate biosynthesis; chorismate biosynthesis; chorismate from D-erythrose 4-phosphate and phosphoenolpyruvate: step 4/7. Functionally, the actual biological function of YdiB remains unclear, nor is it known whether 3-dehydroshikimate or quinate represents the natural substrate. Catalyzes the reversible NAD-dependent reduction of both 3-dehydroshikimate (DHSA) and 3-dehydroquinate to yield shikimate (SA) and quinate, respectively. It can use both NAD or NADP for catalysis, however it has higher catalytic efficiency with NAD. This Escherichia coli O157:H7 protein is Quinate/shikimate dehydrogenase.